The following is a 300-amino-acid chain: tRNA dimethylallyltransferase (300 aa).

11–18 provides a ligand contact to ATP; sequence GPTAVGKS. 13–18 is a binding site for substrate; the sequence is TAVGKS. The segment at 35–38 is interaction with substrate tRNA; it reads DSIQ.

Belongs to the IPP transferase family. In terms of assembly, monomer. Requires Mg(2+) as cofactor.

The catalysed reaction is adenosine(37) in tRNA + dimethylallyl diphosphate = N(6)-dimethylallyladenosine(37) in tRNA + diphosphate. Functionally, catalyzes the transfer of a dimethylallyl group onto the adenine at position 37 in tRNAs that read codons beginning with uridine, leading to the formation of N6-(dimethylallyl)adenosine (i(6)A). The sequence is that of tRNA dimethylallyltransferase from Borrelia duttonii (strain Ly).